Here is a 371-residue protein sequence, read N- to C-terminus: Epoxyqueuosine reductase (371 aa).

Asp-137 (proton donor) is an active-site residue. Positions 179–211 (IPLPVDTPVENQCGKCTACISSCPTNAILENGV) constitute a 4Fe-4S ferredoxin-type domain. 8 residues coordinate [4Fe-4S] cluster: Cys-191, Cys-194, Cys-197, Cys-201, Cys-217, Cys-244, Cys-247, and Cys-251.

Belongs to the QueG family. Monomer. Cob(II)alamin serves as cofactor. [4Fe-4S] cluster is required as a cofactor.

Its subcellular location is the cytoplasm. The catalysed reaction is epoxyqueuosine(34) in tRNA + AH2 = queuosine(34) in tRNA + A + H2O. It functions in the pathway tRNA modification; tRNA-queuosine biosynthesis. Its function is as follows. Catalyzes the conversion of epoxyqueuosine (oQ) to queuosine (Q), which is a hypermodified base found in the wobble positions of tRNA(Asp), tRNA(Asn), tRNA(His) and tRNA(Tyr). This chain is Epoxyqueuosine reductase, found in Aliivibrio fischeri (strain ATCC 700601 / ES114) (Vibrio fischeri).